A 332-amino-acid chain; its full sequence is Autoinducer 2 import system permease protein LsrD (332 aa).

A run of 7 helical transmembrane segments spans residues 5 to 25 (LNWE…FGAL), 43 to 63 (ICIG…GIDI), 83 to 103 (GWPL…CGLF), 116 to 136 (LVIT…LSGM), 160 to 180 (LGGL…FWLL), 210 to 230 (IPYV…LVMV), and 259 to 279 (IYGG…VGYL).

The protein belongs to the binding-protein-dependent transport system permease family. AraH/RbsC subfamily. As to quaternary structure, the complex is composed of two ATP-binding proteins (LsrA), two transmembrane proteins (LsrC and LsrD) and a solute-binding protein (LsrB).

Its subcellular location is the cell inner membrane. In terms of biological role, part of the ABC transporter complex LsrABCD involved in autoinducer 2 (AI-2) import. Probably responsible for the translocation of the substrate across the membrane. In Klebsiella pneumoniae subsp. pneumoniae (strain ATCC 700721 / MGH 78578), this protein is Autoinducer 2 import system permease protein LsrD (lsrD).